The sequence spans 261 residues: Indole-3-glycerol phosphate synthase (261 aa).

This sequence belongs to the TrpC family.

The catalysed reaction is 1-(2-carboxyphenylamino)-1-deoxy-D-ribulose 5-phosphate + H(+) = (1S,2R)-1-C-(indol-3-yl)glycerol 3-phosphate + CO2 + H2O. It functions in the pathway amino-acid biosynthesis; L-tryptophan biosynthesis; L-tryptophan from chorismate: step 4/5. The polypeptide is Indole-3-glycerol phosphate synthase (Campylobacter curvus (strain 525.92)).